The sequence spans 993 residues: Ephrin type-B receptor 3 (993 aa).

Residues 1–29 form the signal peptide; it reads MAGARPPPGLLPLLAPLLLPLLLPAGCWA. Topologically, residues 30-554 are extracellular; the sequence is LEETLMDTKW…AQQLQEQLPL (525 aa). Positions 31–209 constitute an Eph LBD domain; the sequence is EETLMDTKWV…FYKKCASTTA (179 aa). A disulfide bridge links C73 with C191. 2 consecutive Fibronectin type-III domains span residues 331 to 446 and 447 to 540; these read VPSP…TNQA and APSE…TTSE. 2 N-linked (GlcNAc...) asparagine glycosylation sites follow: N343 and N440. A helical membrane pass occupies residues 555–575; the sequence is IVGSTVAGFVFMVVVVVIALV. Residues 576 to 993 are Cytoplasmic-facing; that stretch reads CLRKQRHGPD…QMNQTLPVQV (418 aa). Y609 carries the post-translational modification Phosphotyrosine; by autocatalysis. A Protein kinase domain is found at 628-891; sequence VKIEEVIGAG…QIVNTLDKLI (264 aa). ATP contacts are provided by residues 634 to 642 and K660; that span reads IGAGEFGEV. D753 functions as the Proton acceptor in the catalytic mechanism. The 65-residue stretch at 920-984 folds into the SAM domain; that stretch reads TTFTTVGDWL…LCSIQDMRLQ (65 aa). The PDZ-binding signature appears at 991-993; sequence VQV.

Belongs to the protein kinase superfamily. Tyr protein kinase family. Ephrin receptor subfamily. Heterotetramer upon binding of the ligand. The heterotetramer is composed of an ephrin dimer and a receptor dimer. Oligomerization is probably required to induce biological responses. In terms of processing, phosphorylated. Autophosphorylates upon ligand-binding. Autophosphorylation on Tyr-609 is required for interaction with SH2 domain-containing proteins. Post-translationally, ubiquitinated by RNF186, mainly through 'Lys-48' and 'Lys-63'-linked polyubiquitin chains. As to expression, expressed in cells of the retinal ganglion cell layer during retinal axon guidance to the optic disk. Expressed by Paneth and progenitor cells in the crypts of the intestinal epithelium (at protein level). Expressed in myogenic progenitor cells.

It is found in the cell membrane. The protein resides in the cell projection. It localises to the dendrite. The enzyme catalyses L-tyrosyl-[protein] + ATP = O-phospho-L-tyrosyl-[protein] + ADP + H(+). In terms of biological role, receptor tyrosine kinase which binds promiscuously transmembrane ephrin-B family ligands residing on adjacent cells, leading to contact-dependent bidirectional signaling into neighboring cells. The signaling pathway downstream of the receptor is referred to as forward signaling while the signaling pathway downstream of the ephrin ligand is referred to as reverse signaling. Generally has an overlapping and redundant function with EPHB2. Like EPHB2, functions in axon guidance during development regulating for instance the neurons forming the corpus callosum and the anterior commissure, 2 major interhemispheric connections between the temporal lobes of the cerebral cortex. In addition to its role in axon guidance also plays an important redundant role with other ephrin-B receptors in development and maturation of dendritic spines and the formation of excitatory synapses. Controls other aspects of development through regulation of cell migration and positioning. This includes angiogenesis, palate development and thymic epithelium development for instance. Forward and reverse signaling through the EFNB2/EPHB3 complex also regulate migration and adhesion of cells that tubularize the urethra and septate the cloaca. Finally, plays an important role in intestinal epithelium differentiation segregating progenitor from differentiated cells in the crypt. The polypeptide is Ephrin type-B receptor 3 (Ephb3) (Mus musculus (Mouse)).